Here is a 445-residue protein sequence, read N- to C-terminus: Methionine aminopeptidase 2 (445 aa).

The tract at residues 1 to 89 (MAAQAPVDEI…DPPRVLISQL (89 aa)) is disordered. Residues 60-74 (AKKKKKRKPKKKKKN) show a composition bias toward basic residues. Residue H198 participates in substrate binding. D218, D229, and H298 together coordinate a divalent metal cation. H306 serves as a coordination point for substrate. A divalent metal cation contacts are provided by E331 and E426.

Belongs to the peptidase M24A family. Methionine aminopeptidase eukaryotic type 2 subfamily. The cofactor is Co(2+). Zn(2+) serves as cofactor. Mn(2+) is required as a cofactor. Requires Fe(2+) as cofactor.

The protein localises to the cytoplasm. The enzyme catalyses Release of N-terminal amino acids, preferentially methionine, from peptides and arylamides.. In terms of biological role, cotranslationally removes the N-terminal methionine from nascent proteins. The N-terminal methionine is often cleaved when the second residue in the primary sequence is small and uncharged (Met-Ala-, Cys, Gly, Pro, Ser, Thr, or Val). This chain is Methionine aminopeptidase 2, found in Podospora anserina (strain S / ATCC MYA-4624 / DSM 980 / FGSC 10383) (Pleurage anserina).